Here is a 525-residue protein sequence, read N- to C-terminus: GMP synthase [glutamine-hydrolyzing] (525 aa).

Residues Lys8 to Asn207 enclose the Glutamine amidotransferase type-1 domain. Cys85 acts as the Nucleophile in catalysis. Catalysis depends on residues His181 and Glu183. One can recognise a GMPS ATP-PPase domain in the interval Trp208–Arg400. Ser235–Ser241 contributes to the ATP binding site.

Homodimer.

It catalyses the reaction XMP + L-glutamine + ATP + H2O = GMP + L-glutamate + AMP + diphosphate + 2 H(+). Its pathway is purine metabolism; GMP biosynthesis; GMP from XMP (L-Gln route): step 1/1. Its function is as follows. Catalyzes the synthesis of GMP from XMP. This chain is GMP synthase [glutamine-hydrolyzing], found in Shewanella piezotolerans (strain WP3 / JCM 13877).